The following is a 286-amino-acid chain: General stress protein A (286 aa).

Residues 12–17 (CADDNY) and 111–112 (DC) contribute to the UDP site. Residues D111, D113, and H247 each coordinate Mn(2+). 247-253 (HFCGGEK) is a binding site for UDP.

This sequence belongs to the glycosyltransferase 8 family.

This Bacillus subtilis (strain 168) protein is General stress protein A (gspA).